The sequence spans 75 residues: Large ribosomal subunit protein bL31 (75 aa).

The protein belongs to the bacterial ribosomal protein bL31 family. Type A subfamily. In terms of assembly, part of the 50S ribosomal subunit.

Binds the 23S rRNA. The sequence is that of Large ribosomal subunit protein bL31 from Gluconobacter oxydans (strain 621H) (Gluconobacter suboxydans).